A 143-amino-acid polypeptide reads, in one-letter code: Large ribosomal subunit protein uL16 (143 aa).

Belongs to the universal ribosomal protein uL16 family. In terms of assembly, part of the 50S ribosomal subunit.

In terms of biological role, binds 23S rRNA and is also seen to make contacts with the A and possibly P site tRNAs. This is Large ribosomal subunit protein uL16 from Fusobacterium nucleatum subsp. nucleatum (strain ATCC 25586 / DSM 15643 / BCRC 10681 / CIP 101130 / JCM 8532 / KCTC 2640 / LMG 13131 / VPI 4355).